Here is a 164-residue protein sequence, read N- to C-terminus: MAFKDNAVELEERVVAVNRVTKVVKGGRRLRFAALVVVGDHNGRVGFGTGKAQEVPEAIRKAVDDAKKNLIEVPMVGTTIPHEVLSEFGGAKVLLKPAVEGSGVAAGGAVRAVVELAGVADITSKSLGSNTPINIVRATVEGLKQLKRAEEIAALRGISVSDLA.

One can recognise an S5 DRBM domain in the interval 10-73 (LEERVVAVNR…DDAKKNLIEV (64 aa)).

It belongs to the universal ribosomal protein uS5 family. Part of the 30S ribosomal subunit. Contacts proteins S4 and S8.

With S4 and S12 plays an important role in translational accuracy. Functionally, located at the back of the 30S subunit body where it stabilizes the conformation of the head with respect to the body. The chain is Small ribosomal subunit protein uS5 from Streptococcus pneumoniae serotype 2 (strain D39 / NCTC 7466).